We begin with the raw amino-acid sequence, 537 residues long: Eukaryotic translation initiation factor 3 subunit L (537 aa).

The 213-residue stretch at 301–513 (TFSSILLYIQ…IHIADTKVSH (213 aa)) folds into the PCI domain.

The protein belongs to the eIF-3 subunit L family. In terms of assembly, component of the eukaryotic translation initiation factor 3 (eIF-3) complex.

Its subcellular location is the cytoplasm. Its function is as follows. Component of the eukaryotic translation initiation factor 3 (eIF-3) complex, which is involved in protein synthesis of a specialized repertoire of mRNAs and, together with other initiation factors, stimulates binding of mRNA and methionyl-tRNAi to the 40S ribosome. The eIF-3 complex specifically targets and initiates translation of a subset of mRNAs involved in cell proliferation. The protein is Eukaryotic translation initiation factor 3 subunit L of Aedes aegypti (Yellowfever mosquito).